Reading from the N-terminus, the 202-residue chain is Probable pathogenesis-related protein CaO19.2336 (202 aa).

An N-terminal signal peptide occupies residues 1-20 (MKTLLFIYLQLLLLLSIIIG). 2 N-linked (GlcNAc...) asparagine glycosylation sites follow: N58 and N152. In terms of domain architecture, SCP spans 66-179 (LKEHNNKRKL…LNALYIVCSY (114 aa)).

This sequence belongs to the CRISP family.

It localises to the secreted. Its function is as follows. Secreted protein that acts as a virulence factor during infections. In Candida albicans (strain SC5314 / ATCC MYA-2876) (Yeast), this protein is Probable pathogenesis-related protein CaO19.2336.